Consider the following 186-residue polypeptide: Ribosome-recycling factor (186 aa).

Belongs to the RRF family.

The protein localises to the cytoplasm. Functionally, responsible for the release of ribosomes from messenger RNA at the termination of protein biosynthesis. May increase the efficiency of translation by recycling ribosomes from one round of translation to another. The chain is Ribosome-recycling factor from Albidiferax ferrireducens (strain ATCC BAA-621 / DSM 15236 / T118) (Rhodoferax ferrireducens).